Reading from the N-terminus, the 149-residue chain is Protein FAM72A (149 aa).

Belongs to the FAM72 family. Interacts with UNG. As to expression, expressed at high levels in stomach and also in kidney and, at low levels, in heart (at protein level). In the stomach, highly expressed in foveolar cells, parietal cells and chief cells (at protein level). In kidney, expressed in endothelial cells, mesangial and epithelial cells (parietal and visceral epithelium) around glomerulus (at protein level).

Its subcellular location is the cytoplasm. It is found in the mitochondrion. In terms of biological role, may play a role in the regulation of cellular reactive oxygen species metabolism. May participate in cell growth regulation. The sequence is that of Protein FAM72A (Fam72a) from Rattus norvegicus (Rat).